The primary structure comprises 93 residues: UPF0728 protein C10orf53 homolog (93 aa).

It belongs to the UPF0728 family.

The protein is UPF0728 protein C10orf53 homolog of Mus musculus (Mouse).